The chain runs to 83 residues: Spanin, outer lipoprotein subunit (83 aa).

Positions 1 to 50 (MSTLRELRLRRALKEQSMKYRLSIKKTLPRWKGALIGLFLICVRTISGSG) are cleaved as a signal peptide.

This sequence belongs to the T7likevirus o-spanin family. Homodimer. Interacts (via C-terminus) with the spanin inner membrane subunit (via C-terminus). Part of the spanin complex which spans the entire periplasmic space. The spanin complex is composed of spanin inner membrane subunit and spanin outer membrane subunit.

The protein localises to the host cell outer membrane. In terms of biological role, component of the spanin complex that disrupts the host outer membrane and participates in cell lysis during virus exit. The spanin complex conducts the final step in host lysis by disrupting the outer membrane after holin and endolysin action have permeabilized the inner membrane and degraded the host peptidoglycans. Host outer membrane disruption is possibly due to local fusion between the inner and outer membrane performed by the spanin complex. The polypeptide is Spanin, outer lipoprotein subunit (18.7) (Escherichia coli (Bacteriophage T3)).